The primary structure comprises 264 residues: Triosephosphate isomerase (264 aa).

13–15 (NWK) provides a ligand contact to substrate. Histidine 98 functions as the Electrophile in the catalytic mechanism. Catalysis depends on glutamate 170, which acts as the Proton acceptor. Substrate-binding positions include glycine 176, serine 216, and 237–238 (GG).

This sequence belongs to the triosephosphate isomerase family. As to quaternary structure, homodimer.

The protein resides in the cytoplasm. It catalyses the reaction D-glyceraldehyde 3-phosphate = dihydroxyacetone phosphate. It participates in carbohydrate biosynthesis; gluconeogenesis. Its pathway is carbohydrate degradation; glycolysis; D-glyceraldehyde 3-phosphate from glycerone phosphate: step 1/1. Its function is as follows. Involved in the gluconeogenesis. Catalyzes stereospecifically the conversion of dihydroxyacetone phosphate (DHAP) to D-glyceraldehyde-3-phosphate (G3P). The protein is Triosephosphate isomerase of Protochlamydia amoebophila (strain UWE25).